A 79-amino-acid chain; its full sequence is U-actitoxin-Bgr3d (79 aa).

Residues 1–21 (MSYERLLCLVLVASFIAASVA) form the signal peptide. Positions 22–38 (QHPGDAPRMEDDSSAIQ) are excised as a propeptide. Disulfide bonds link Cys-44-Cys-76, Cys-46-Cys-69, and Cys-59-Cys-77.

Belongs to the sea anemone type 3 (BDS) potassium channel toxin family.

It is found in the secreted. The protein resides in the nematocyst. Its function is as follows. Potently and selectively inhibits voltage-gated potassium channels Kv11/KCNH/ERG. Acts as a gating-modifier toxin that shifts the voltage-dependence of ERG activation in the positive direction and suppresses its current amplitudes elicited by strong depolarizing pulses that maximally activate the channels. This Bunodosoma granuliferum (Red warty sea anemone) protein is U-actitoxin-Bgr3d.